The following is a 1143-amino-acid chain: Serine/threonine-protein kinase BRI1-like 2 (1143 aa).

Residues 1 to 31 form the signal peptide; the sequence is MTTSPIRVRIRTRIQISFIFLLTHLSQSSSS. Topologically, residues 32–756 are extracellular; it reads DQSSLKTDSL…GTRAASWANS (725 aa). The short motif at 68–75 is the Cys pair 1 element; the sequence is CQFSGVTC. LRR repeat units follow at residues 77–101, 102–125, 126–150, 151–175, 177–200, 203–227, 228–250, 251–275, 277–299, 300–324, 326–349, 351–373, 374–398, 399–422, 424–446, 447–470, 472–493, 494–518, 520–542, 570–594, 610–634, 635–660, 662–681, and 682–707; these read GGRVTEINLSGSGLSGIVSFNAFTS, LDSLSVLKLSENFFVLNSTSLLLL, PLTLTHLELSSSGLIGTLPENFFSK, YSNLISITLSYNNFTGKLPNDLFLS, KKLQTLDLSYNNITGPISGLTIPL, CVSMTYLDFSGNSISGYISDSLINC, TNLKSLNLSYNNFDGQIPKSFGE, LKLLQSLDLSHNRLTGWIPPEIGDT, RSLQNLRLSYNNFTGVIPESLSS, CSWLQSLDLSNNNISGPFPNTILRS, GSLQILLLSNNLISGDFPTSISAC, SLRIADFSSNRFSGVIPPDLCPG, AASLEELRLPDNLVTGEIPPAISQC, SELRTIDLSLNYLNGTIPPEIGNL, KLEQFIAWYNNIAGEIPPEIGKL, QNLKDLILNNNQLTGEIPPEFFNC, NIEWVSFTSNRLTGEVPKDFGI, LSRLAVLQLGNNNFTGEIPPELGKC, TLVWLDLNTNHLTGEIPPRLGRQ, VGGLVEFSGIRPERLLQIPSLKSCD, YQTIEYLDLSYNQLRGKIPDEIGEM, IALQVLELSHNQLSGEIPFTIGQLKN, GVFDASDNRLQGQIPESFSN, and LSFLVQIDLSNNELTGPIPQRGQLST. Residues asparagine 84 and asparagine 118 are each glycosylated (N-linked (GlcNAc...) asparagine). 4 N-linked (GlcNAc...) asparagine glycosylation sites follow: asparagine 163, asparagine 188, asparagine 226, and asparagine 234. N-linked (GlcNAc...) asparagine glycans are attached at residues asparagine 288 and asparagine 312. The N-linked (GlcNAc...) asparagine glycan is linked to asparagine 412. Asparagine 469 carries an N-linked (GlcNAc...) asparagine glycan. Asparagine 506 carries N-linked (GlcNAc...) asparagine glycosylation. The N-linked (GlcNAc...) asparagine glycan is linked to asparagine 681. Positions 720–727 match the Cys pair 2 motif; sequence CGVPLPEC. The chain crosses the membrane as a helical span at residues 757-777; it reads IVLGVLISAASVCILIVWAIA. Residues 778–1143 are Cytoplasmic-facing; sequence VRARRRDADD…NNSHSHSNSL (366 aa). Threonine 835 carries the phosphothreonine modification. In terms of domain architecture, Protein kinase spans 838–1129; that stretch reads FSAASMIGHG…LQVVASLREL (292 aa). ATP is bound by residues 844-852 and lysine 866; that span reads IGHGGFGEV. Tyrosine 911 bears the Phosphotyrosine mark. Aspartate 966 (proton acceptor) is an active-site residue. At serine 1001 the chain carries Phosphoserine. A Phosphotyrosine modification is found at tyrosine 1009.

This sequence belongs to the protein kinase superfamily. Ser/Thr protein kinase family. As to quaternary structure, interacts with TTL3. Expressed in provascular and procambial sites throughout plant development. Expressed throughout globe- to heart-staged embryos. Then, it is restricted to procambial cells by the late torpedo stage, and this pattern persists throughout the duration of embryo development. After germination, it is expressed not only in procambial cells throughout the plant but also in all lateral organ primordia before the onset of vascularization.

The protein resides in the cell membrane. It catalyses the reaction L-seryl-[protein] + ATP = O-phospho-L-seryl-[protein] + ADP + H(+). It carries out the reaction L-threonyl-[protein] + ATP = O-phospho-L-threonyl-[protein] + ADP + H(+). Its function is as follows. Receptor with a serine/threonine-protein kinase activity, which may transduce extracellular spatial and temporal signals into downstream cell differentiation responses in provascular and procambial cells. In contrast to BRI1, BRL1 and BRL3, it does not bind brassinolide. The sequence is that of Serine/threonine-protein kinase BRI1-like 2 from Arabidopsis thaliana (Mouse-ear cress).